The sequence spans 339 residues: Serpentine receptor class alpha-22 (339 aa).

6 helical membrane-spanning segments follow: residues 33–53, 110–130, 150–170, 199–219, 250–270, and 284–304; these read IFISTIVLISYCFILLAIQAL, VVDLYFFFLTGYFSTYSVFSL, FIAISLLVIQLLLTLVSFYIA, VRTMVMVCCLIVTGFTYYLSV, IFIILQLSCVMLTSIGMNLLL, and IALFLPGITYANLCLPLVIYF.

This sequence belongs to the nematode receptor-like protein sra family.

Its subcellular location is the membrane. This is Serpentine receptor class alpha-22 (sra-22) from Caenorhabditis elegans.